The sequence spans 130 residues: Phosphoribosyl-AMP cyclohydrolase (130 aa).

Asp-77 is a Mg(2+) binding site. Cys-78 provides a ligand contact to Zn(2+). Mg(2+)-binding residues include Asp-79 and Asp-81. 2 residues coordinate Zn(2+): Cys-95 and Cys-102.

The protein belongs to the PRA-CH family. Homodimer. Mg(2+) serves as cofactor. It depends on Zn(2+) as a cofactor.

It localises to the cytoplasm. The catalysed reaction is 1-(5-phospho-beta-D-ribosyl)-5'-AMP + H2O = 1-(5-phospho-beta-D-ribosyl)-5-[(5-phospho-beta-D-ribosylamino)methylideneamino]imidazole-4-carboxamide. It functions in the pathway amino-acid biosynthesis; L-histidine biosynthesis; L-histidine from 5-phospho-alpha-D-ribose 1-diphosphate: step 3/9. Functionally, catalyzes the hydrolysis of the adenine ring of phosphoribosyl-AMP. The chain is Phosphoribosyl-AMP cyclohydrolase from Pseudomonas putida (strain W619).